The chain runs to 324 residues: Beta-ketoacyl-[acyl-carrier-protein] synthase III (324 aa).

Residues Cys-114 and His-251 contribute to the active site. The tract at residues 252–256 (QANLR) is ACP-binding. The active site involves Asn-281.

It belongs to the thiolase-like superfamily. FabH family. In terms of assembly, homodimer.

The protein localises to the cytoplasm. It catalyses the reaction malonyl-[ACP] + acetyl-CoA + H(+) = 3-oxobutanoyl-[ACP] + CO2 + CoA. Its pathway is lipid metabolism; fatty acid biosynthesis. Catalyzes the condensation reaction of fatty acid synthesis by the addition to an acyl acceptor of two carbons from malonyl-ACP. Catalyzes the first condensation reaction which initiates fatty acid synthesis and may therefore play a role in governing the total rate of fatty acid production. Possesses both acetoacetyl-ACP synthase and acetyl transacylase activities. Its substrate specificity determines the biosynthesis of branched-chain and/or straight-chain of fatty acids. The sequence is that of Beta-ketoacyl-[acyl-carrier-protein] synthase III from Rhodobacter capsulatus (Rhodopseudomonas capsulata).